The chain runs to 338 residues: tRNA (cytosine(34)-C(5))-methyltransferase, mitochondrial (338 aa).

S-adenosyl-L-methionine contacts are provided by residues 140-146 (CAAPGGK), Glu-163, Asp-194, and Asp-212. Catalysis depends on Cys-266, which acts as the Nucleophile.

The protein belongs to the class I-like SAM-binding methyltransferase superfamily. RsmB/NOP family.

It localises to the mitochondrion matrix. It catalyses the reaction cytidine(34) in mitochondrial tRNA + S-adenosyl-L-methionine = 5-methylcytidine(34) in mitochondrial tRNA + S-adenosyl-L-homocysteine + H(+). Functionally, mitochondrial tRNA methyltransferase that mediates methylation of cytosine to 5-methylcytosine (m5C) at position 34 of mt-tRNA(Met). mt-tRNA(Met) methylation at cytosine(34) takes place at the wobble position of the anticodon and initiates the formation of 5-formylcytosine (f(5)c) at this position. mt-tRNA(Met) containing the f(5)c modification at the wobble position enables recognition of the AUA codon in addition to the AUG codon, expanding codon recognition in mitochondrial translation. In Bos taurus (Bovine), this protein is tRNA (cytosine(34)-C(5))-methyltransferase, mitochondrial.